The primary structure comprises 287 residues: ATP synthase gamma chain (287 aa).

Belongs to the ATPase gamma chain family. F-type ATPases have 2 components, CF(1) - the catalytic core - and CF(0) - the membrane proton channel. CF(1) has five subunits: alpha(3), beta(3), gamma(1), delta(1), epsilon(1). CF(0) has three main subunits: a, b and c.

It is found in the cell inner membrane. Functionally, produces ATP from ADP in the presence of a proton gradient across the membrane. The gamma chain is believed to be important in regulating ATPase activity and the flow of protons through the CF(0) complex. This chain is ATP synthase gamma chain, found in Ectopseudomonas mendocina (strain ymp) (Pseudomonas mendocina).